Here is a 269-residue protein sequence, read N- to C-terminus: Shikimate dehydrogenase (NADP(+)) (269 aa).

Shikimate contacts are provided by residues 22 to 24 (TLS) and Thr-68. Lys-72 acts as the Proton acceptor in catalysis. Positions 93 and 104 each coordinate shikimate. Residues 128–132 (GAGGA), 152–157 (NRTKSR), and Phe-210 each bind NADP(+). A shikimate-binding site is contributed by Tyr-212. Gly-233 contacts NADP(+).

It belongs to the shikimate dehydrogenase family. Homodimer.

The enzyme catalyses shikimate + NADP(+) = 3-dehydroshikimate + NADPH + H(+). Its pathway is metabolic intermediate biosynthesis; chorismate biosynthesis; chorismate from D-erythrose 4-phosphate and phosphoenolpyruvate: step 4/7. Functionally, involved in the biosynthesis of the chorismate, which leads to the biosynthesis of aromatic amino acids. Catalyzes the reversible NADPH linked reduction of 3-dehydroshikimate (DHSA) to yield shikimate (SA). This is Shikimate dehydrogenase (NADP(+)) from Saccharolobus solfataricus (strain ATCC 35092 / DSM 1617 / JCM 11322 / P2) (Sulfolobus solfataricus).